We begin with the raw amino-acid sequence, 556 residues long: Arginine--tRNA ligase 1 (556 aa).

Positions 132 to 142 (ANPTGDLHLGH) match the 'HIGH' region motif.

It belongs to the class-I aminoacyl-tRNA synthetase family. As to quaternary structure, monomer.

Its subcellular location is the cytoplasm. It catalyses the reaction tRNA(Arg) + L-arginine + ATP = L-arginyl-tRNA(Arg) + AMP + diphosphate. The protein is Arginine--tRNA ligase 1 of Bacillus anthracis.